The primary structure comprises 501 residues: MDQKVRVRYAPSPTGFLHIGNAQSALFNYLFARHFDGTMVLRIEDTDTKRNVEDGEASQRENLHWLGIDWDEGPNKPNPKYAPYRQSERNKEGIYHKYIQELLDKGIAYKDYSTEEELAEMRERQKANNEPPHYDGRWYGKSEEEQKAAEAKGLKPTIRFHFPKDHDYEWDDIARGHVSFNSDNLGGDFIIEKSDGMPTYNFAVVVDDHTMDITHVLRGADHISNTPKQIAIYEALGWEHPTFCHIPLIFNPKTRKKLSKRDKDTLQFISEYKKHGYLHEAIFNFIAFLGWSPVGEREIYSKEELIKVYDPKRMSKAPAYFDQKKLDWMNAQYIKSMSIDELTDRTMELIKEGETEEAKRLQSIPEEQLTELLKKTIKVHQRDVNKLLEVIQYAWSYYTVLDQSFNYDLLKDNEDFANEDVLAVLKGLKAKLENGDDDLDYSQAIKEVGKDTGIKGRGLYFPLNLAFTGSTSAPQIYEIMDIYSRDTDIELLDRMIKAFEN.

Residues 11-21 carry the 'HIGH' region motif; it reads PSPTGFLHIGN. The 'KMSKS' region motif lies at 257 to 261; the sequence is KLSKR. Lys260 contacts ATP.

Belongs to the class-I aminoacyl-tRNA synthetase family. Glutamate--tRNA ligase type 1 subfamily. Monomer.

The protein localises to the cytoplasm. It catalyses the reaction tRNA(Glu) + L-glutamate + ATP = L-glutamyl-tRNA(Glu) + AMP + diphosphate. Its function is as follows. Catalyzes the attachment of glutamate to tRNA(Glu) in a two-step reaction: glutamate is first activated by ATP to form Glu-AMP and then transferred to the acceptor end of tRNA(Glu). In Limosilactobacillus reuteri subsp. reuteri (strain JCM 1112) (Lactobacillus reuteri), this protein is Glutamate--tRNA ligase.